The primary structure comprises 159 residues: Ornithine decarboxylase antizyme (159 aa).

This sequence belongs to the ODC antizyme family. As to quaternary structure, interacts with ODC1 and thereby sterically blocks ODC homodimerization.

Its function is as follows. Ornithine decarboxylase (ODC) antizyme protein that negatively regulates ODC activity and intracellular polyamine biosynthesis and uptake in response to increased intracellular polyamine levels. Binds to ODC monomers, inhibiting the assembly of the functional ODC homodimer, and targets the monomers for ubiquitin-independent proteolytic destruction by the 26S proteasome. The polypeptide is Ornithine decarboxylase antizyme (Caenorhabditis elegans).